Here is a 61-residue protein sequence, read N- to C-terminus: Large ribosomal subunit protein bL32 (61 aa).

Positions 1–16 (MPTPKKKTSRSKRDMR) are enriched in basic residues. A disordered region spans residues 1–47 (MPTPKKKTSRSKRDMRRSHDGLTAPAIAVEKKTGELVRPHRAHKGAD). Residues 29–38 (VEKKTGELVR) are compositionally biased toward basic and acidic residues.

This sequence belongs to the bacterial ribosomal protein bL32 family.

In Bdellovibrio bacteriovorus (strain ATCC 15356 / DSM 50701 / NCIMB 9529 / HD100), this protein is Large ribosomal subunit protein bL32.